The following is a 193-amino-acid chain: Acyl carrier protein phosphodiesterase (193 aa).

It belongs to the AcpH family.

The enzyme catalyses holo-[ACP] + H2O = apo-[ACP] + (R)-4'-phosphopantetheine + H(+). In terms of biological role, converts holo-ACP to apo-ACP by hydrolytic cleavage of the phosphopantetheine prosthetic group from ACP. This is Acyl carrier protein phosphodiesterase from Pectobacterium atrosepticum (strain SCRI 1043 / ATCC BAA-672) (Erwinia carotovora subsp. atroseptica).